The chain runs to 838 residues: Periostin (838 aa).

Positions Met-1–Ala-23 are cleaved as a signal peptide. The 55-residue stretch at Gly-42–Ala-96 folds into the EMI domain. 5 disulfide bridges follow: Cys-46/Cys-82, Cys-71/Cys-335, Cys-81/Cys-94, Cys-210/Cys-313, and Cys-469/Cys-474. An S-cysteinyl cysteine modification is found at Cys-62. FAS1 domains follow at residues Pro-99–Leu-232, Gly-236–Leu-367, Asp-370–Ile-494, and Glu-498–Leu-630. Asn-601 carries an N-linked (GlcNAc...) asparagine glycan. Residues Gln-811–Gln-838 are disordered. Basic residues predominate over residues Gln-826 to Gln-838.

Homodimer. Interacts with BMP1 and fibronectin. Gamma-carboxylation is controversial. Gamma-carboxyglutamated; gamma-carboxyglutamate residues are formed by vitamin K dependent carboxylation; these residues may be required for binding to calcium. According to a more recent report in human, does not contain vitamin K-dependent gamma-carboxyglutamate residues. In terms of tissue distribution, preferentially expressed in periosteum and periodontal ligament. Also expressed in the developing and adult heart.

It localises to the golgi apparatus. The protein resides in the secreted. It is found in the extracellular space. Its subcellular location is the extracellular matrix. Functionally, induces cell attachment and spreading and plays a role in cell adhesion. Enhances incorporation of BMP1 in the fibronectin matrix of connective tissues, and subsequent proteolytic activation of lysyl oxidase LOX. This chain is Periostin (Postn), found in Mus musculus (Mouse).